A 489-amino-acid polypeptide reads, in one-letter code: N-succinylglutamate 5-semialdehyde dehydrogenase (489 aa).

221–226 contributes to the NAD(+) binding site; that stretch reads GSSGTG. Active-site residues include glutamate 244 and cysteine 278.

The protein belongs to the aldehyde dehydrogenase family. AstD subfamily.

It catalyses the reaction N-succinyl-L-glutamate 5-semialdehyde + NAD(+) + H2O = N-succinyl-L-glutamate + NADH + 2 H(+). The protein operates within amino-acid degradation; L-arginine degradation via AST pathway; L-glutamate and succinate from L-arginine: step 4/5. In terms of biological role, catalyzes the NAD-dependent reduction of succinylglutamate semialdehyde into succinylglutamate. This Sorangium cellulosum (strain So ce56) (Polyangium cellulosum (strain So ce56)) protein is N-succinylglutamate 5-semialdehyde dehydrogenase.